The primary structure comprises 99 residues: Ubiquitin-related modifier 1 (99 aa).

At glycine 99 the chain carries 1-thioglycine. A Glycyl lysine isopeptide (Gly-Lys) (interchain with K-? in acceptor proteins) cross-link involves residue glycine 99.

Belongs to the URM1 family. In terms of assembly, homodimer; homodimerization may provide an autoprotection to the highly active C-terminal residue before attacking its substrates. Interacts with NCS2 and NCS6. Forms a conjugate with the target protein AHP1. Post-translationally, C-terminal thiocarboxylation occurs in 2 steps, it is first acyl-adenylated (-COAMP) via the hesA/moeB/thiF part of UBA4, then thiocarboxylated (-COSH) via the rhodanese domain of UBA4.

The protein localises to the cytoplasm. Its subcellular location is the nucleus. It participates in tRNA modification; 5-methoxycarbonylmethyl-2-thiouridine-tRNA biosynthesis. Functionally, acts as a sulfur carrier required for 2-thiolation of mcm(5)S(2)U at tRNA wobble positions of cytosolic tRNA(Lys), tRNA(Glu) and tRNA(Gln). Serves as sulfur donor in tRNA 2-thiolation reaction by being thiocarboxylated (-COSH) at its C-terminus by the MOCS3 homolog UBA4. The sulfur is then transferred to tRNA to form 2-thiolation of mcm(5)S(2)U. Prior mcm(5) tRNA modification by the elongator complex is required for 2-thiolation. Also acts as a ubiquitin-like protein (UBL) that is covalently conjugated via an isopeptide bond to lysine residues of target proteins such as AHP1. The thiocarboxylated form serves as substrate for conjugation and oxidative stress specifically induces the formation of UBL-protein conjugates. This Saccharomyces cerevisiae (strain RM11-1a) (Baker's yeast) protein is Ubiquitin-related modifier 1.